A 90-amino-acid polypeptide reads, in one-letter code: Small ribosomal subunit protein uS15c (90 aa).

This sequence belongs to the universal ribosomal protein uS15 family. As to quaternary structure, part of the 30S ribosomal subunit.

It localises to the plastid. Its subcellular location is the chloroplast. The polypeptide is Small ribosomal subunit protein uS15c (rps15-A) (Zea mays (Maize)).